Here is a 260-residue protein sequence, read N- to C-terminus: UPF0246 protein BTH_I1090 (260 aa).

It belongs to the UPF0246 family.

The sequence is that of UPF0246 protein BTH_I1090 from Burkholderia thailandensis (strain ATCC 700388 / DSM 13276 / CCUG 48851 / CIP 106301 / E264).